The primary structure comprises 339 residues: Biotin synthase (339 aa).

A Radical SAM core domain is found at Ser-51–Arg-278. [4Fe-4S] cluster-binding residues include Cys-66, Cys-70, and Cys-73. [2Fe-2S] cluster is bound by residues Cys-110, Cys-141, Cys-201, and Arg-273.

The protein belongs to the radical SAM superfamily. Biotin synthase family. As to quaternary structure, homodimer. [4Fe-4S] cluster serves as cofactor. Requires [2Fe-2S] cluster as cofactor.

It catalyses the reaction (4R,5S)-dethiobiotin + (sulfur carrier)-SH + 2 reduced [2Fe-2S]-[ferredoxin] + 2 S-adenosyl-L-methionine = (sulfur carrier)-H + biotin + 2 5'-deoxyadenosine + 2 L-methionine + 2 oxidized [2Fe-2S]-[ferredoxin]. The protein operates within cofactor biosynthesis; biotin biosynthesis; biotin from 7,8-diaminononanoate: step 2/2. Its function is as follows. Catalyzes the conversion of dethiobiotin (DTB) to biotin by the insertion of a sulfur atom into dethiobiotin via a radical-based mechanism. This chain is Biotin synthase, found in Herminiimonas arsenicoxydans.